Here is a 695-residue protein sequence, read N- to C-terminus: DUF724 domain-containing protein 3 (695 aa).

The interval 376–464 (ITVTPLKQQD…GTSDTIRVDD (89 aa)) is disordered. Over residues 384–402 (QDAETEGKKSPKKTPEPVK) the composition is skewed to basic and acidic residues. Residues 434–459 (NQNSNLNETDETCNVSKAGVNGTSDT) are compositionally biased toward polar residues. The 186-residue stretch at 509 to 694 (PFTKNLPFWK…LEFITSVLAP (186 aa)) folds into the DUF724 domain. Positions 614–684 (VEERKCLEKR…TIDQEIANVE (71 aa)) form a coiled coil.

Homodimer.

Functionally, may be involved in the polar growth of plant cells via transportation of RNAs. The chain is DUF724 domain-containing protein 3 from Arabidopsis thaliana (Mouse-ear cress).